A 162-amino-acid chain; its full sequence is Universal stress protein MJ0577 (162 aa).

Residues proline 11, valine 41, glycine 127–asparagine 133, and serine 141–threonine 143 each bind ATP.

It belongs to the universal stress protein A family. In terms of assembly, homodimer. Mn(2+) is required as a cofactor.

It is found in the cytoplasm. In Methanocaldococcus jannaschii (strain ATCC 43067 / DSM 2661 / JAL-1 / JCM 10045 / NBRC 100440) (Methanococcus jannaschii), this protein is Universal stress protein MJ0577.